A 109-amino-acid polypeptide reads, in one-letter code: Large ribosomal subunit protein uL24 (109 aa).

The protein belongs to the universal ribosomal protein uL24 family. In terms of assembly, part of the 50S ribosomal subunit.

Functionally, one of two assembly initiator proteins, it binds directly to the 5'-end of the 23S rRNA, where it nucleates assembly of the 50S subunit. In terms of biological role, one of the proteins that surrounds the polypeptide exit tunnel on the outside of the subunit. The polypeptide is Large ribosomal subunit protein uL24 (Rickettsia rickettsii (strain Iowa)).